A 144-amino-acid chain; its full sequence is Large ribosomal subunit protein uL15 (144 aa).

Positions 1-53 (MRLNTLSPAEGAKHSAKRLGRGIGSGLGKTGGRGHKGQKSRTGGGVRRGFEGG) are disordered. The span at 21 to 31 (RGIGSGLGKTG) shows a compositional bias: gly residues.

Belongs to the universal ribosomal protein uL15 family. Part of the 50S ribosomal subunit.

Binds to the 23S rRNA. This Haemophilus influenzae (strain ATCC 51907 / DSM 11121 / KW20 / Rd) protein is Large ribosomal subunit protein uL15.